The chain runs to 226 residues: uncharacterized protein (226 aa).

Disordered stretches follow at residues 1–20 and 205–226; these read MGAE…AVQT and LDRK…QRDA.

This is an uncharacterized protein from Treponema pallidum (strain Nichols).